A 132-amino-acid chain; its full sequence is ATP synthase epsilon chain (132 aa).

A compositionally biased stretch (basic and acidic residues) spans 88–102; sequence IDKERAEAARQRAQE. Residues 88-112 are disordered; sequence IDKERAEAARQRAQERLNSQSDDTD.

The protein belongs to the ATPase epsilon chain family. F-type ATPases have 2 components, CF(1) - the catalytic core - and CF(0) - the membrane proton channel. CF(1) has five subunits: alpha(3), beta(3), gamma(1), delta(1), epsilon(1). CF(0) has three main subunits: a, b and c. The F(1)F(0) complex interacts with SpoIIIJ and YqjG; YqgA is found in the same complex.

Its subcellular location is the cell membrane. Its function is as follows. Produces ATP from ADP in the presence of a proton gradient across the membrane. This Bacillus subtilis (strain 168) protein is ATP synthase epsilon chain (atpC).